A 311-amino-acid chain; its full sequence is Protoheme IX farnesyltransferase (311 aa).

9 consecutive transmembrane segments (helical) span residues 38-58, 62-82, 113-133, 134-154, 162-182, 188-208, 230-250, 251-271, and 286-306; these read IKVV…APDM, YFVQ…AAVI, LIFS…AANW, LTAQ…TMFL, IVIG…SETG, PWIL…ALAI, FTKT…FLPF, LIHM…IIFI, and ALNL…ALFA.

This sequence belongs to the UbiA prenyltransferase family. Protoheme IX farnesyltransferase subfamily.

Its subcellular location is the cell inner membrane. It carries out the reaction heme b + (2E,6E)-farnesyl diphosphate + H2O = Fe(II)-heme o + diphosphate. The protein operates within porphyrin-containing compound metabolism; heme O biosynthesis; heme O from protoheme: step 1/1. In terms of biological role, converts heme B (protoheme IX) to heme O by substitution of the vinyl group on carbon 2 of heme B porphyrin ring with a hydroxyethyl farnesyl side group. The sequence is that of Protoheme IX farnesyltransferase from Psychromonas ingrahamii (strain DSM 17664 / CCUG 51855 / 37).